Consider the following 118-residue polypeptide: Basic phospholipase A2 2 (118 aa).

7 disulfides stabilise this stretch: C11/C71, C27/C117, C29/C45, C44/C98, C51/C91, C60/C84, and C78/C89. Residues Y28, G30, and G32 each contribute to the Ca(2+) site. Residue H48 is part of the active site. Residue D49 participates in Ca(2+) binding. D92 is a catalytic residue.

Belongs to the phospholipase A2 family. Group I subfamily. D49 sub-subfamily. Ca(2+) is required as a cofactor. As to expression, expressed by the venom gland.

The protein resides in the secreted. It catalyses the reaction a 1,2-diacyl-sn-glycero-3-phosphocholine + H2O = a 1-acyl-sn-glycero-3-phosphocholine + a fatty acid + H(+). Its function is as follows. Snake venom phospholipase A2 (PLA2) that inhibits neuromuscular transmission by blocking acetylcholine release from the nerve termini. PLA2 catalyzes the calcium-dependent hydrolysis of the 2-acyl groups in 3-sn-phosphoglycerides. This is Basic phospholipase A2 2 from Laticauda colubrina (Yellow-lipped sea krait).